Here is a 188-residue protein sequence, read N- to C-terminus: Ion-translocating oxidoreductase complex subunit B (188 aa).

The tract at residues 1–26 is hydrophobic; sequence MNGVLLAIGVLLPICLASGALLGYAA. The 59-residue stretch at 32–90 folds into the 4Fe-4S domain; sequence QGDPVAERVNALLPQTQCGQCGYPGCKPYAEAIAAGDRINKCPPGGEATIQALADLLDL. C49, C52, C57, C73, C113, C116, C119, C123, C143, C146, C149, and C153 together coordinate [4Fe-4S] cluster. 4Fe-4S ferredoxin-type domains follow at residues 104-133 and 134-163; these read RVAYIREAECIGCTKCIQACPVDAIVGAAR and LMHTVIADECTGCDLCLEPCPVDCIEMREI.

This sequence belongs to the 4Fe4S bacterial-type ferredoxin family. RnfB subfamily. The complex is composed of six subunits: RnfA, RnfB, RnfC, RnfD, RnfE and RnfG. [4Fe-4S] cluster is required as a cofactor.

The protein resides in the cell inner membrane. In terms of biological role, part of a membrane-bound complex that couples electron transfer with translocation of ions across the membrane. The polypeptide is Ion-translocating oxidoreductase complex subunit B (Pseudomonas paraeruginosa (strain DSM 24068 / PA7) (Pseudomonas aeruginosa (strain PA7))).